A 772-amino-acid chain; its full sequence is Carnitine O-palmitoyltransferase 1, muscle isoform (772 aa).

The Cytoplasmic portion of the chain corresponds to 1–47; that stretch reads MAEAHQAVAFQFTVTPDGVDFRLSREALRHIYLSGINSWKKRLIRIK. The helical transmembrane segment at 48 to 73 threads the bilayer; sequence NGILRGVYPGSPTSWLVVVMATVGSN. At 74–102 the chain is on the mitochondrial intermembrane side; that stretch reads YCKVDISMGLVHCIQRCLPTRYGSYGTPQ. Residues 103-122 traverse the membrane as a helical segment; it reads TETLLSMVIFSTGVWATGIF. At 123-772 the chain is on the cytoplasmic side; sequence LFRQTLKLLL…DLFKISKTDS (650 aa). H473 (proton acceptor) is an active-site residue. 555–567 provides a ligand contact to CoA; that stretch reads GKGLIKKCRTSPD. Residues Y589 and T602 each contribute to the (R)-carnitine site.

It belongs to the carnitine/choline acetyltransferase family. As to expression, high expression in heart, skeletal muscle and brown adipose tissue. Also expressed in white adipose tissue, but not in liver.

Its subcellular location is the mitochondrion outer membrane. It catalyses the reaction (R)-carnitine + hexadecanoyl-CoA = O-hexadecanoyl-(R)-carnitine + CoA. The protein operates within lipid metabolism; fatty acid beta-oxidation. Functionally, catalyzes the transfer of the acyl group of long-chain fatty acid-CoA conjugates onto carnitine, an essential step for the mitochondrial uptake of long-chain fatty acids and their subsequent beta-oxidation in the mitochondrion. The polypeptide is Carnitine O-palmitoyltransferase 1, muscle isoform (Cpt1b) (Rattus norvegicus (Rat)).